Here is a 154-residue protein sequence, read N- to C-terminus: Spermatogenesis-associated protein 19, mitochondrial (154 aa).

A mitochondrion-targeting transit peptide spans 1-24; it reads MIITTWIMYIFARKTVGLPFPPRV. A phosphoserine mark is found at S26 and S116.

Expressed specifically in adult testis (at protein level).

The protein resides in the mitochondrion outer membrane. The protein localises to the mitochondrion. It is found in the cell projection. It localises to the cilium. Its subcellular location is the flagellum. In terms of biological role, essential for sperm motility and male fertility. Plays an important role in sperm motility by regulating the organization and function of the mitochondria and is also required for correct sperm midpiece assembly. This Mus musculus (Mouse) protein is Spermatogenesis-associated protein 19, mitochondrial (Spata19).